Consider the following 131-residue polypeptide: UPF0102 protein CYA_0708 (131 aa).

The protein belongs to the UPF0102 family.

This chain is UPF0102 protein CYA_0708, found in Synechococcus sp. (strain JA-3-3Ab) (Cyanobacteria bacterium Yellowstone A-Prime).